The following is a 241-amino-acid chain: MSLTLLPAVDVRDGKAVRLRQGESGSETDYGSPFEAARTWVEAGAEWIHLVDLDAAFGTGNNRDQLREIVHELGDRVNIELSGGVRDDASLDAALEAGAARVNIGTAALENPDWTASVIKKYGDRVAVGLDVRGHTLAARGWTREGGDLFETMKFLDSVGCSRYVVTDVAKDGMMSGPNIQLLSEVAERTDAKVTASGGISKLDDLRAIKELAEIGVDSAILGKSLYARAFTLQEALEVAK.

The active-site Proton acceptor is the Asp10. Asp131 acts as the Proton donor in catalysis.

It belongs to the HisA/HisF family.

The protein resides in the cytoplasm. It catalyses the reaction 1-(5-phospho-beta-D-ribosyl)-5-[(5-phospho-beta-D-ribosylamino)methylideneamino]imidazole-4-carboxamide = 5-[(5-phospho-1-deoxy-D-ribulos-1-ylimino)methylamino]-1-(5-phospho-beta-D-ribosyl)imidazole-4-carboxamide. The protein operates within amino-acid biosynthesis; L-histidine biosynthesis; L-histidine from 5-phospho-alpha-D-ribose 1-diphosphate: step 4/9. The sequence is that of 1-(5-phosphoribosyl)-5-[(5-phosphoribosylamino)methylideneamino] imidazole-4-carboxamide isomerase from Bifidobacterium longum (strain NCC 2705).